A 395-amino-acid chain; its full sequence is SWI/SNF and RSC complexes subunit ssr4 (395 aa).

Positions 182 to 230 (KKHIPEGTALSQRETLPNMGSAQMKSQSRTPSFSNVTTSPVPPINSNAT) are disordered. Residues 190 to 230 (ALSQRETLPNMGSAQMKSQSRTPSFSNVTTSPVPPINSNAT) are compositionally biased toward polar residues.

It belongs to the SSR4 family. As to quaternary structure, component of the RSC complex composed of at least arp9, arp42, rsc1, rsc4, rsc7, rsc9, rsc58, sfh1, snf21, ssr1, ssr2, ssr3 and ssr4. The complex interacts with histone and histone variant components of centromeric chromatin. Component of the SWI/SNF global transcription activator complex composed of at least arp9, arp42, snf5, snf22, snf30, sbf59, sol1, ssr1, ssr2, ssr3, ssr4 and tfg3.

It localises to the cytoplasm. It is found in the nucleus. Functionally, component of the chromatin structure remodeling complex (RSC), which is involved in transcription regulation and nucleosome positioning. Controls particularly membrane and organelle development genes. Part of the SWI/SNF complex, an ATP-dependent chromatin remodeling complex, required for the positive and negative regulation of gene expression of a large number of genes. It changes chromatin structure by altering DNA-histone contacts within a nucleosome, leading eventually to a change in nucleosome position, thus facilitating or repressing binding of gene-specific transcription factors. In Schizosaccharomyces pombe (strain 972 / ATCC 24843) (Fission yeast), this protein is SWI/SNF and RSC complexes subunit ssr4 (ssr4).